The primary structure comprises 31 residues: Kunitz-type serine protease inhibitor RsTIQ2 (31 aa).

In terms of domain architecture, BPTI/Kunitz inhibitor spans 1 to 31; sequence EAVDFDSQCVPTADPGKCKFYFPMWNVNVFT.

Serine protease inhibitor. Inhibits trypsin, elastase, plasmin and kallikrein. The sequence is that of Kunitz-type serine protease inhibitor RsTIQ2 from Rhipicephalus sanguineus (Brown dog tick).